The sequence spans 399 residues: Elongation factor Tu 1 (399 aa).

The 200-residue stretch at 10 to 209 (KPHVNIGTIG…QVDTYIPEPE (200 aa)) folds into the tr-type G domain. The segment at 19–26 (GHVDHGKT) is G1. Residue 19–26 (GHVDHGKT) participates in GTP binding. A Mg(2+)-binding site is contributed by threonine 26. Residues 60 to 64 (GITIA) form a G2 region. The G3 stretch occupies residues 81-84 (DCPG). GTP contacts are provided by residues 81-85 (DCPGH) and 136-139 (NKAD). Positions 136–139 (NKAD) are G4. The tract at residues 174 to 176 (SAL) is G5.

Belongs to the TRAFAC class translation factor GTPase superfamily. Classic translation factor GTPase family. EF-Tu/EF-1A subfamily. In terms of assembly, monomer.

It is found in the cytoplasm. It catalyses the reaction GTP + H2O = GDP + phosphate + H(+). Functionally, GTP hydrolase that promotes the GTP-dependent binding of aminoacyl-tRNA to the A-site of ribosomes during protein biosynthesis. In Syntrophotalea carbinolica (strain DSM 2380 / NBRC 103641 / GraBd1) (Pelobacter carbinolicus), this protein is Elongation factor Tu 1.